Here is a 595-residue protein sequence, read N- to C-terminus: Tyrosine-protein phosphatase cdcA (595 aa).

The tract at residues 32–57 (TPFPYPAEQPKSPSKRRAQASPSKKR) is disordered. The span at 44–57 (PSKRRAQASPSKKR) shows a compositional bias: basic residues. The 149-residue stretch at 233–381 (LPSTVSEVRS…QGSFREWWFE (149 aa)) folds into the Tyrosine-protein phosphatase domain. Catalysis depends on Cys-322, which acts as the Phosphocysteine intermediate. Residues 392–595 (QPNPVTPGRS…GSPVRVKAQA (204 aa)) are disordered. The segment covering 449–461 (RKSHRKDSRHHPY) has biased composition (basic residues). The segment covering 471 to 483 (VDKDTRKTRRSTD) has biased composition (basic and acidic residues). A compositionally biased stretch (polar residues) spans 502–526 (SKSPAASPGQRSISYSATVTASYTL).

Belongs to the protein-tyrosine phosphatase family. Non-receptor class CDC14 subfamily.

It is found in the nucleus. The protein resides in the cytoplasm. The protein localises to the cell septum. The enzyme catalyses O-phospho-L-tyrosyl-[protein] + H2O = L-tyrosyl-[protein] + phosphate. Functionally, protein phosphatase which antagonizes mitotic cyclin-dependent kinase nimX, the inactivation of which is essential for exit from mitosis. To access its substrates, is released from nucleolar sequestration during mitosis. Plays an essential in coordinating the nuclear division cycle with cytokinesis through the cytokinesis checkpoint. Involved in chromosome segregation, where it is required for meiosis I spindle dissambly as well as for establishing two consecutive chromosome segregation phases. Required for the transcription of the two major endoglucanase genes eglA and eglB and growth on synthetic cellulose as the sole carbon source. This is Tyrosine-protein phosphatase cdcA (cdcA) from Emericella nidulans (strain FGSC A4 / ATCC 38163 / CBS 112.46 / NRRL 194 / M139) (Aspergillus nidulans).